Consider the following 277-residue polypeptide: C2H2-type zinc-finger transcription factor (277 aa).

Disordered stretches follow at residues 23–66 (PTMN…AHPP) and 78–146 (MNEP…TDSI). Polar residues predominate over residues 27 to 37 (EIETTDNTYPR). The segment at 185-208 (HPCPDCGRVFTRSTARNFHRQSGT) adopts a C2H2-type; degenerate zinc-finger fold.

The protein belongs to the GLI C2H2-type zinc-finger protein family.

The protein localises to the nucleus. C2H2-type zinc-finger transcription factor that controls the expression of the nonribosomal peptide synthases inpA and inpB, as well as of the other inp cluster-associated genes. Also mediates the expression of the asperfuranone biosynthesis gene cluster by binding to the afoA promoter. Probably recognizes the 5'-CT/C/AAAAGGAT/AT/GG/CA-3' motif in the promoters of teget genes. This chain is C2H2-type zinc-finger transcription factor, found in Emericella nidulans (strain FGSC A4 / ATCC 38163 / CBS 112.46 / NRRL 194 / M139) (Aspergillus nidulans).